A 591-amino-acid polypeptide reads, in one-letter code: Metalloendopeptidase OPG085 (591 aa).

Residue His-41 coordinates Zn(2+). The active site involves Glu-44. Positions 45 and 112 each coordinate Zn(2+).

Belongs to the peptidase M44 family. The cofactor is Zn(2+). In terms of processing, undergoes proteolytic processing during the course of infection. May be cleaved into 46 kDa and 22 kDa products (Potential).

It is found in the virion. Its function is as follows. Probably involved in maturation of some viral proteins by processing them preferentially at Ala-Gly-|-Ser/Thr/Lys motifs. Does not seem to be responsible for the cleavage of major core proteins. The chain is Metalloendopeptidase OPG085 (OPG085) from Monkeypox virus.